Here is a 208-residue protein sequence, read N- to C-terminus: Ribosomal RNA small subunit methyltransferase G (208 aa).

Residues G74, L79, 125-126, and R140 contribute to the S-adenosyl-L-methionine site; that span reads VE.

The protein belongs to the methyltransferase superfamily. RNA methyltransferase RsmG family.

The protein localises to the cytoplasm. It carries out the reaction guanosine(527) in 16S rRNA + S-adenosyl-L-methionine = N(7)-methylguanosine(527) in 16S rRNA + S-adenosyl-L-homocysteine. Functionally, specifically methylates the N7 position of guanine in position 527 of 16S rRNA. This chain is Ribosomal RNA small subunit methyltransferase G, found in Shewanella denitrificans (strain OS217 / ATCC BAA-1090 / DSM 15013).